Consider the following 2513-residue polypeptide: Probable polyketide synthase 7 (2513 aa).

The Ketosynthase family 3 (KS3) domain maps to 11-441; the sequence is EKGVAIVGIG…GSNCCLLISE (431 aa). Catalysis depends on for beta-ketoacyl synthase activity residues cysteine 181, histidine 323, and histidine 362. Residues 632–665 form an acyl/malonyl transferase region; that stretch reads GVNPSFILGHSLGEISASYCSGMIDLDTFCYTVY. Serine 642 acts as the For acyl/malonyl transferase activity in catalysis. The N-terminal hotdog fold stretch occupies residues 922 to 1044; the sequence is IDHLGISNSF…SNFQLLDHGN (123 aa). In terms of domain architecture, PKS/mFAS DH spans 922-1206; that stretch reads IDHLGISNSF…CKSLIPIKDS (285 aa). Catalysis depends on histidine 956, which acts as the Proton acceptor; for dehydratase activity. Residues 1061-1206 form a C-terminal hotdog fold region; sequence NLSKLTKNEL…CKSLIPIKDS (146 aa). The Proton donor; for dehydratase activity role is filled by aspartate 1119. A Carrier domain is found at 2426–2503; sequence IGNKNIDELF…ISIKMILNSL (78 aa). The residue at position 2463 (serine 2463) is an O-(pantetheine 4'-phosphoryl)serine.

Pantetheine 4'-phosphate is required as a cofactor.

Probable polyketide synthase. The sequence is that of Probable polyketide synthase 7 (pks7) from Dictyostelium discoideum (Social amoeba).